Reading from the N-terminus, the 152-residue chain is SsrA-binding protein (152 aa).

Belongs to the SmpB family.

The protein resides in the cytoplasm. In terms of biological role, required for rescue of stalled ribosomes mediated by trans-translation. Binds to transfer-messenger RNA (tmRNA), required for stable association of tmRNA with ribosomes. tmRNA and SmpB together mimic tRNA shape, replacing the anticodon stem-loop with SmpB. tmRNA is encoded by the ssrA gene; the 2 termini fold to resemble tRNA(Ala) and it encodes a 'tag peptide', a short internal open reading frame. During trans-translation Ala-aminoacylated tmRNA acts like a tRNA, entering the A-site of stalled ribosomes, displacing the stalled mRNA. The ribosome then switches to translate the ORF on the tmRNA; the nascent peptide is terminated with the 'tag peptide' encoded by the tmRNA and targeted for degradation. The ribosome is freed to recommence translation, which seems to be the essential function of trans-translation. The polypeptide is SsrA-binding protein (Rickettsia typhi (strain ATCC VR-144 / Wilmington)).